A 174-amino-acid polypeptide reads, in one-letter code: Peptide deformylase (174 aa).

Fe cation-binding residues include cysteine 96 and histidine 138. The active site involves glutamate 139. Histidine 142 serves as a coordination point for Fe cation.

It belongs to the polypeptide deformylase family. The cofactor is Fe(2+).

The enzyme catalyses N-terminal N-formyl-L-methionyl-[peptide] + H2O = N-terminal L-methionyl-[peptide] + formate. Functionally, removes the formyl group from the N-terminal Met of newly synthesized proteins. Requires at least a dipeptide for an efficient rate of reaction. N-terminal L-methionine is a prerequisite for activity but the enzyme has broad specificity at other positions. The sequence is that of Peptide deformylase from Helicobacter pylori (strain J99 / ATCC 700824) (Campylobacter pylori J99).